The primary structure comprises 721 residues: Cell wall protein RBT1 (721 aa).

The first 20 residues, 1-20 (MRFATAQLAALAYYILSTEA), serve as a signal peptide directing secretion. One can recognise a Flo11 domain in the interval 55-278 (GSKNKREAEI…DCQCDTPSPS (224 aa)). Disordered stretches follow at residues 278-410 (STTT…LTTT), 453-510 (LTET…TVTE), and 555-666 (TPAT…ALVS). Positions 454–499 (TETTPVPSSVDSTSVTSAPETTPESTAPESSAPESSAPESSAPVTE) are enriched in low complexity. The span at 500–510 (TPTGPVSTVTE) shows a compositional bias: polar residues. Composition is skewed to low complexity over residues 555 to 575 (TPAT…VPAT) and 584 to 663 (SSAP…KTSA). S696 carries the GPI-anchor amidated serine lipid modification. A propeptide spans 697–721 (SFEGAGNNMRLTYGAAIIGLAAFLI) (removed in mature form).

Belongs to the HWP1 family. The GPI-anchor is attached to the protein in the endoplasmic reticulum and serves to target the protein to the cell surface. There, the glucosamine-inositol phospholipid moiety is cleaved off and the GPI-modified mannoprotein is covalently attached via its lipidless GPI glycan remnant to the 1,6-beta-glucan of the outer cell wall layer.

Its subcellular location is the secreted. The protein localises to the cell wall. It localises to the membrane. In terms of biological role, GPI-anchored cell wall protein required for mating efficiency, biofilm formation, and virulence. Involved in normal disseminated infection, but not in intestinal colonization. In Candida albicans (strain SC5314 / ATCC MYA-2876) (Yeast), this protein is Cell wall protein RBT1 (RBT1).